Consider the following 447-residue polypeptide: Transducin beta-like protein 2 (447 aa).

The interval 38 to 72 (RSGRPACQKANGFPPDKSSGSKKQKQYQRIRKEKP) is disordered. The segment covering 57 to 69 (GSKKQKQYQRIRK) has biased composition (basic residues). WD repeat units follow at residues 88 to 127 (SHSG…QREH), 134 to 174 (VELD…DGGY), 186 to 226 (KHKA…STIN), 228 to 267 (NQMN…GEFQ), 277 to 316 (GHSA…KKKQ), 329 to 367 (AAGA…KEEC), and 371 to 409 (VHGE…RAMV). Residue K168 forms a Glycyl lysine isopeptide (Lys-Gly) (interchain with G-Cter in SUMO2) linkage. At T433 the chain carries Phosphothreonine; by ATM or ATR.

The polypeptide is Transducin beta-like protein 2 (TBL2) (Homo sapiens (Human)).